We begin with the raw amino-acid sequence, 320 residues long: Acetyl-coenzyme A carboxylase carboxyl transferase subunit alpha (320 aa).

The CoA carboxyltransferase C-terminal domain maps to 42-295 (IEEKALAALT…GDAIAKSFAD (254 aa)).

Belongs to the AccA family. As to quaternary structure, acetyl-CoA carboxylase is a heterohexamer composed of biotin carboxyl carrier protein (AccB), biotin carboxylase (AccC) and two subunits each of ACCase subunit alpha (AccA) and ACCase subunit beta (AccD).

It localises to the cytoplasm. The catalysed reaction is N(6)-carboxybiotinyl-L-lysyl-[protein] + acetyl-CoA = N(6)-biotinyl-L-lysyl-[protein] + malonyl-CoA. Its pathway is lipid metabolism; malonyl-CoA biosynthesis; malonyl-CoA from acetyl-CoA: step 1/1. In terms of biological role, component of the acetyl coenzyme A carboxylase (ACC) complex. First, biotin carboxylase catalyzes the carboxylation of biotin on its carrier protein (BCCP) and then the CO(2) group is transferred by the carboxyltransferase to acetyl-CoA to form malonyl-CoA. The protein is Acetyl-coenzyme A carboxylase carboxyl transferase subunit alpha of Rhodopseudomonas palustris (strain BisA53).